Consider the following 294-residue polypeptide: 4-hydroxy-tetrahydrodipicolinate synthase (294 aa).

Position 45 (Thr45) interacts with pyruvate. Catalysis depends on Tyr133, which acts as the Proton donor/acceptor. Residue Lys161 is the Schiff-base intermediate with substrate of the active site. Ile203 is a pyruvate binding site.

Belongs to the DapA family. As to quaternary structure, homotetramer; dimer of dimers.

The protein localises to the cytoplasm. It carries out the reaction L-aspartate 4-semialdehyde + pyruvate = (2S,4S)-4-hydroxy-2,3,4,5-tetrahydrodipicolinate + H2O + H(+). Its pathway is amino-acid biosynthesis; L-lysine biosynthesis via DAP pathway; (S)-tetrahydrodipicolinate from L-aspartate: step 3/4. Catalyzes the condensation of (S)-aspartate-beta-semialdehyde [(S)-ASA] and pyruvate to 4-hydroxy-tetrahydrodipicolinate (HTPA). This chain is 4-hydroxy-tetrahydrodipicolinate synthase, found in Alcanivorax borkumensis (strain ATCC 700651 / DSM 11573 / NCIMB 13689 / SK2).